We begin with the raw amino-acid sequence, 239 residues long: Small ribosomal subunit protein eS6A (239 aa).

Ser235 and Ser236 each carry phosphoserine.

This sequence belongs to the eukaryotic ribosomal protein eS6 family. In terms of assembly, component of the small ribosomal subunit (SSU). Mature yeast ribosomes consist of a small (40S) and a large (60S) subunit. The 40S small subunit contains 1 molecule of ribosomal RNA (18S rRNA) and at least 33 different proteins. The large 60S subunit contains 3 rRNA molecules (25S, 5.8S and 5S rRNA) and at least 46 different proteins. Interacts with snoRNA U3. uS11 interacts with MPP10. Component of the ribosomal small subunit (SSU) processome composed of at least 40 protein subunits and snoRNA U3. Post-translationally, phosphorylated.

It localises to the cytoplasm. In terms of biological role, component of the ribosome, a large ribonucleoprotein complex responsible for the synthesis of proteins in the cell. The small ribosomal subunit (SSU) binds messenger RNAs (mRNAs) and translates the encoded message by selecting cognate aminoacyl-transfer RNA (tRNA) molecules. The large subunit (LSU) contains the ribosomal catalytic site termed the peptidyl transferase center (PTC), which catalyzes the formation of peptide bonds, thereby polymerizing the amino acids delivered by tRNAs into a polypeptide chain. The nascent polypeptides leave the ribosome through a tunnel in the LSU and interact with protein factors that function in enzymatic processing, targeting, and the membrane insertion of nascent chains at the exit of the ribosomal tunnel. eS6 is involved in nucleolar processing of pre-18S ribosomal RNA and ribosome assembly. This chain is Small ribosomal subunit protein eS6A (rps601), found in Schizosaccharomyces pombe (strain 972 / ATCC 24843) (Fission yeast).